We begin with the raw amino-acid sequence, 180 residues long: Bifunctional protein PyrR (180 aa).

Residues 101–113 (VILIDDVLFTGRT) carry the PRPP-binding motif.

The protein belongs to the purine/pyrimidine phosphoribosyltransferase family. PyrR subfamily. In terms of assembly, homodimer and homohexamer; in equilibrium.

It catalyses the reaction UMP + diphosphate = 5-phospho-alpha-D-ribose 1-diphosphate + uracil. In terms of biological role, regulates transcriptional attenuation of the pyrimidine nucleotide (pyr) operon by binding in a uridine-dependent manner to specific sites on pyr mRNA. This disrupts an antiterminator hairpin in the RNA and favors formation of a downstream transcription terminator, leading to a reduced expression of downstream genes. Functionally, also displays a weak uracil phosphoribosyltransferase activity which is not physiologically significant. This Oceanobacillus iheyensis (strain DSM 14371 / CIP 107618 / JCM 11309 / KCTC 3954 / HTE831) protein is Bifunctional protein PyrR.